We begin with the raw amino-acid sequence, 172 residues long: Type IV secretion system putative outer membrane lipoprotein BMEII0036 (172 aa).

Positions M1–A15 are cleaved as a signal peptide. The N-palmitoyl cysteine moiety is linked to residue C16. C16 is lipidated: S-diacylglycerol cysteine. The OmpA-like domain occupies W58–K172.

The protein resides in the cell outer membrane. This is Type IV secretion system putative outer membrane lipoprotein BMEII0036 from Brucella melitensis biotype 1 (strain ATCC 23456 / CCUG 17765 / NCTC 10094 / 16M).